Reading from the N-terminus, the 231-residue chain is Orotidine 5'-phosphate decarboxylase (231 aa).

Residues Asp11, Lys33, 60 to 69, Thr117, Arg178, Gln187, Gly207, and Arg208 contribute to the substrate site; that span reads DLKFHDIPNT. Lys62 serves as the catalytic Proton donor.

The protein belongs to the OMP decarboxylase family. Type 1 subfamily. As to quaternary structure, homodimer.

The catalysed reaction is orotidine 5'-phosphate + H(+) = UMP + CO2. It functions in the pathway pyrimidine metabolism; UMP biosynthesis via de novo pathway; UMP from orotate: step 2/2. Functionally, catalyzes the decarboxylation of orotidine 5'-monophosphate (OMP) to uridine 5'-monophosphate (UMP). The sequence is that of Orotidine 5'-phosphate decarboxylase from Nitrosomonas europaea (strain ATCC 19718 / CIP 103999 / KCTC 2705 / NBRC 14298).